The sequence spans 158 residues: UPF0262 protein R00612 (158 aa).

The protein belongs to the UPF0262 family.

This chain is UPF0262 protein R00612, found in Rhizobium meliloti (strain 1021) (Ensifer meliloti).